The sequence spans 389 residues: Protein RAFTIN 1A (389 aa).

An N-terminal signal peptide occupies residues 1–20; the sequence is MARFLVALLATTLVAVQAGG. The segment covering 73–92 has biased composition (basic and acidic residues); it reads DRPPFDYRDYSRSPPDDEPS. Positions 73–105 are disordered; that stretch reads DRPPFDYRDYSRSPPDDEPSKSTGAASGARDFD. In terms of domain architecture, BURP spans 169 to 383; it reads FFHEEAVRVG…PYGHIIWAKN (215 aa).

Specifically expressed in anthers, in the tapetum and microspores (at protein level).

Functionally, required for pollen development. Probably synthesized in the tapetum, packaged in Ubisch bodies and transported at appropriate stages to the micropsores. This Triticum aestivum (Wheat) protein is Protein RAFTIN 1A (RAFTIN1A).